The following is a 120-amino-acid chain: Large ribosomal subunit protein bL12 (120 aa).

This sequence belongs to the bacterial ribosomal protein bL12 family. As to quaternary structure, homodimer. Part of the ribosomal stalk of the 50S ribosomal subunit. Forms a multimeric L10(L12)X complex, where L10 forms an elongated spine to which 2 to 4 L12 dimers bind in a sequential fashion. Binds GTP-bound translation factors.

Its function is as follows. Forms part of the ribosomal stalk which helps the ribosome interact with GTP-bound translation factors. Is thus essential for accurate translation. The protein is Large ribosomal subunit protein bL12 of Haemophilus ducreyi (strain 35000HP / ATCC 700724).